A 469-amino-acid chain; its full sequence is Glutamate--tRNA ligase (469 aa).

The 'HIGH' region signature appears at 9–19 (PSPTGFLHVGG). Residues cysteine 98, cysteine 100, cysteine 125, and aspartate 127 each contribute to the Zn(2+) site. A 'KMSKS' region motif is present at residues 236–240 (KLSKR). Lysine 239 is a binding site for ATP.

This sequence belongs to the class-I aminoacyl-tRNA synthetase family. Glutamate--tRNA ligase type 1 subfamily. As to quaternary structure, monomer. Zn(2+) is required as a cofactor.

Its subcellular location is the cytoplasm. The catalysed reaction is tRNA(Glu) + L-glutamate + ATP = L-glutamyl-tRNA(Glu) + AMP + diphosphate. Catalyzes the attachment of glutamate to tRNA(Glu) in a two-step reaction: glutamate is first activated by ATP to form Glu-AMP and then transferred to the acceptor end of tRNA(Glu). This chain is Glutamate--tRNA ligase, found in Shewanella sediminis (strain HAW-EB3).